The primary structure comprises 124 residues: Large ribosomal subunit protein bL12 (124 aa).

The interval 93–124 (GAPSTVKEGASKDEAEEAKKKLEEAGASVELK) is disordered. A compositionally biased stretch (basic and acidic residues) spans 101–116 (GASKDEAEEAKKKLEE).

The protein belongs to the bacterial ribosomal protein bL12 family. In terms of assembly, homodimer. Part of the ribosomal stalk of the 50S ribosomal subunit. Forms a multimeric L10(L12)X complex, where L10 forms an elongated spine to which 2 to 4 L12 dimers bind in a sequential fashion. Binds GTP-bound translation factors.

Its function is as follows. Forms part of the ribosomal stalk which helps the ribosome interact with GTP-bound translation factors. Is thus essential for accurate translation. The polypeptide is Large ribosomal subunit protein bL12 (Marinobacter nauticus (strain ATCC 700491 / DSM 11845 / VT8) (Marinobacter aquaeolei)).